We begin with the raw amino-acid sequence, 347 residues long: High mobility group protein 20A (347 aa).

Composition is skewed to polar residues over residues 1–10 and 40–49; these read MENLMTSSTL and SGATSSTNNP. 2 disordered regions span residues 1–113 and 179–211; these read MENL…YVRF and FSRK…TEVK. Low complexity predominate over residues 55–66; it reads LSQGQLLQSESS. Over residues 72–82 the composition is skewed to basic and acidic residues; sequence NEQRHEDEQRS. The span at 83-96 shows a compositional bias: basic residues; it reads KRGGWSKGRKRKKP. A DNA-binding region (HMG box) is located at residues 103 to 171; it reads PKSPLTGYVR…RYMKELEQYQ (69 aa). Ser-105 is subject to Phosphoserine. A compositionally biased stretch (basic and acidic residues) spans 182-211; the sequence is KTQDRQKGKSHRQDAARQATHDHEKETEVK. Positions 229–273 form a coiled coil; the sequence is SKAREAELRQLRKSNMEFEERNAALQKHVESMRTAVEKLEVDVIQ.

In terms of assembly, interacts with DTNB. As to expression, ubiquitous.

It is found in the nucleus. Plays a role in neuronal differentiation as chromatin-associated protein. Acts as inhibitor of HMG20B. Overcomes the repressive effects of the neuronal silencer REST and induces the activation of neuronal-specific genes. Involved in the recruitment of the histone methyltransferase KMT2A/MLL1 and consequent increased methylation of histone H3 lysine 4. This Homo sapiens (Human) protein is High mobility group protein 20A (HMG20A).